The chain runs to 238 residues: Probable septum site-determining protein MinC (238 aa).

The protein belongs to the MinC family. Interacts with MinD and FtsZ.

In terms of biological role, cell division inhibitor that blocks the formation of polar Z ring septums. Rapidly oscillates between the poles of the cell to destabilize FtsZ filaments that have formed before they mature into polar Z rings. Prevents FtsZ polymerization. In Xylella fastidiosa (strain M12), this protein is Probable septum site-determining protein MinC.